The primary structure comprises 775 residues: MLTTLARASAMLLGARGFASAADLDKKVEMTNWEKGNYINYKKMAENLDIVRARLNRPLTFAEKILYSHLDDPHGQEIERGKSYLKLRPDRVACQDATAQMAILQFMSAGMPSVATPATVHCDHLIEAQLGGDKDLARANEINKEVYDFLSTSCAKYNIGFWKPGSGIIHQILLENYCFPGGLMIGTDSHTPNGGGLGMAAIGVGGADAVDVMAGLPWELKAPNVIGVKLTGQMSGWTAPKDIILKVAGILTVKGGTGAIIEYHGDGVNSLSCTGMGTICNMGAEIGATTSVFPFNDRMYDYLKATKRQSIGDFSRVYAEGLRPDENAQYDQLIEINLSELEPHINGPFTPDLATPISKFKEAVKENNWPSELKVGLIGSCTNSSYEDMSRAASIARDALNHGIKAKSLFTVTPGSEQIRATIERDGQLKTLEEFGGVILANACGPCIGQWDRKDVKKNEANSIISSYNRNFTGRNDANPATHAFVTSPDLVVALTIAGTLNFNPLTDKLKDKDGNEFMLAPPTGEGLPANGYDPGRDTYQAPPADRASISVAVSPSSDRLQILEPFKAWDGKDAKGIPILIKCEGKTTTDHISMAGPWLKYRGHLDNISNNLLIGAVNAENGERNSVKNFETGEYDSVPATARAYKARGIPWVVIGDWNYGEGSSREHAALQPRHLGGMAIITRSFARIHETNLKKQGMLPLTFADPADYDRIPPTAMVDLMCTELAVGKPMTLRVHPKDGASFDVKLSHTFNESQIEWFKNGSALNTMAKKAQ.

A mitochondrion-targeting transit peptide spans 1 to 25 (MLTTLARASAMLLGARGFASAADLD). Residues Gln-95 and 188 to 190 (DSH) each bind substrate. Asn-337 carries an N-linked (GlcNAc...) asparagine glycan. Cys-381 contributes to the [4Fe-4S] cluster binding site. Asn-383 is a glycosylation site (N-linked (GlcNAc...) asparagine). Cys-444 and Cys-447 together coordinate [4Fe-4S] cluster. Arg-470 contributes to the substrate binding site. Asn-471 is a glycosylation site (N-linked (GlcNAc...) asparagine). Substrate is bound by residues Arg-475 and Arg-603. N-linked (GlcNAc...) asparagine glycosylation occurs at Asn-608. 666-667 (SR) contributes to the substrate binding site. Residues Asn-754 and Asn-763 are each glycosylated (N-linked (GlcNAc...) asparagine).

It belongs to the aconitase/IPM isomerase family. In terms of assembly, monomer. [4Fe-4S] cluster is required as a cofactor.

It localises to the mitochondrion. The catalysed reaction is citrate = D-threo-isocitrate. It functions in the pathway carbohydrate metabolism; tricarboxylic acid cycle; isocitrate from oxaloacetate: step 2/2. Catalyzes the isomerization of citrate to isocitrate via cis-aconitate. This is Aconitate hydratase, mitochondrial from Arthroderma benhamiae (strain ATCC MYA-4681 / CBS 112371) (Trichophyton mentagrophytes).